We begin with the raw amino-acid sequence, 828 residues long: Periplasmic nitrate reductase (828 aa).

The tat-type signal signal peptide spans 1-31 (MKLSRRSFMKANAVAAAAAAAGLSVPGVARA). In terms of domain architecture, 4Fe-4S Mo/W bis-MGD-type spans 39–95 (IKWDKAPCRFCGTGCGVLVGTQQGRVVACQGDPDAPVNRGLNCIKGYFLPKIMYGKD). [4Fe-4S] cluster contacts are provided by cysteine 46, cysteine 49, cysteine 53, and cysteine 81. Mo-bis(molybdopterin guanine dinucleotide) is bound by residues lysine 83, glutamine 150, asparagine 175, cysteine 179, 212–219 (WGSNMAEM), 243–247 (STYQH), 262–264 (QSD), methionine 372, glutamine 376, asparagine 482, 508–509 (SD), lysine 531, aspartate 558, and 718–727 (TGRVLEHWHT). Phenylalanine 794 serves as a coordination point for substrate. Mo-bis(molybdopterin guanine dinucleotide) contacts are provided by asparagine 802 and lysine 819.

Belongs to the prokaryotic molybdopterin-containing oxidoreductase family. NasA/NapA/NarB subfamily. As to quaternary structure, component of the periplasmic nitrate reductase NapAB complex composed of NapA and NapB. The cofactor is [4Fe-4S] cluster. Requires Mo-bis(molybdopterin guanine dinucleotide) as cofactor. Post-translationally, predicted to be exported by the Tat system. The position of the signal peptide cleavage has not been experimentally proven.

Its subcellular location is the periplasm. It catalyses the reaction 2 Fe(II)-[cytochrome] + nitrate + 2 H(+) = 2 Fe(III)-[cytochrome] + nitrite + H2O. Catalytic subunit of the periplasmic nitrate reductase complex NapAB. Receives electrons from NapB and catalyzes the reduction of nitrate to nitrite. The protein is Periplasmic nitrate reductase of Escherichia coli O81 (strain ED1a).